Consider the following 331-residue polypeptide: Minor capsid protein A1 (331 aa).

The protein resides in the virion. Minor capsid protein. The polypeptide is Minor capsid protein A1 (Escherichia coli (Bacteriophage SP)).